The sequence spans 401 residues: Argininosuccinate synthase (401 aa).

ATP-binding positions include 7–15 (AYSGGLDTS) and alanine 34. Residues tyrosine 85 and serine 90 each coordinate L-citrulline. Glycine 115 is a binding site for ATP. Positions 117, 121, and 122 each coordinate L-aspartate. Position 121 (asparagine 121) interacts with L-citrulline. Residues arginine 125, serine 174, serine 183, glutamate 259, and tyrosine 271 each coordinate L-citrulline.

It belongs to the argininosuccinate synthase family. Type 1 subfamily. In terms of assembly, homotetramer.

It is found in the cytoplasm. It carries out the reaction L-citrulline + L-aspartate + ATP = 2-(N(omega)-L-arginino)succinate + AMP + diphosphate + H(+). It functions in the pathway amino-acid biosynthesis; L-arginine biosynthesis; L-arginine from L-ornithine and carbamoyl phosphate: step 2/3. The sequence is that of Argininosuccinate synthase from Desulfitobacterium hafniense (strain DSM 10664 / DCB-2).